Reading from the N-terminus, the 432-residue chain is Succinate--CoA ligase [GDP-forming] subunit beta, mitochondrial (432 aa).

A mitochondrion-targeting transit peptide spans 1 to 37 (MASPVAAQAGKLLRALALRPRFLAAGSQAVQLTSRRW). Residues 46 to 274 (KKLMSDNGVR…NAEFRQKDIF (229 aa)) form the ATP-grasp domain. Gln-57 serves as a coordination point for GTP. N6-acetyllysine is present on Lys-73. At Lys-78 the chain carries N6-succinyllysine. 90–92 (GRG) is a GTP binding site. Residues Lys-132 and Lys-139 each carry the N6-acetyllysine modification. Residue Leu-146 coordinates GTP. Phosphoserine is present on Ser-161. Residues Lys-200, Lys-218, and Lys-227 each carry the N6-acetyllysine modification. The Mg(2+) site is built by Asn-243 and Asp-257. Residues Lys-271 and Lys-291 each carry the N6-acetyllysine modification. Asn-308 lines the substrate pocket. At Lys-338 the chain carries N6-succinyllysine. Lys-347 carries the N6-acetyllysine modification. 365 to 367 (GIV) is a binding site for substrate. N6-acetyllysine is present on residues Lys-386 and Lys-423.

The protein belongs to the succinate/malate CoA ligase beta subunit family. GTP-specific subunit beta subfamily. In terms of assembly, heterodimer of an alpha and a beta subunit. The beta subunit determines specificity for GTP. It depends on Mg(2+) as a cofactor. Mainly expressed in liver, kidney, heart, spleen and skeletal muscle. Also found in intestine and colon, and in low amounts in lung, brain, prostate, testis and ovary.

It localises to the mitochondrion. The catalysed reaction is GTP + succinate + CoA = succinyl-CoA + GDP + phosphate. Its pathway is carbohydrate metabolism; tricarboxylic acid cycle; succinate from succinyl-CoA (ligase route): step 1/1. Functionally, GTP-specific succinyl-CoA synthetase functions in the citric acid cycle (TCA), coupling the hydrolysis of succinyl-CoA to the synthesis of GTP and thus represents the only step of substrate-level phosphorylation in the TCA. The beta subunit provides nucleotide specificity of the enzyme and binds the substrate succinate, while the binding sites for coenzyme A and phosphate are found in the alpha subunit. The polypeptide is Succinate--CoA ligase [GDP-forming] subunit beta, mitochondrial (Homo sapiens (Human)).